A 414-amino-acid chain; its full sequence is Serine hydroxymethyltransferase (414 aa).

(6S)-5,6,7,8-tetrahydrofolate-binding positions include Leu117 and 121–123; that span reads GHL. N6-(pyridoxal phosphate)lysine is present on Lys226. (6S)-5,6,7,8-tetrahydrofolate contacts are provided by residues Glu241 and 349-351; that span reads TPF.

Belongs to the SHMT family. As to quaternary structure, homodimer. The cofactor is pyridoxal 5'-phosphate.

The protein localises to the cytoplasm. It catalyses the reaction (6R)-5,10-methylene-5,6,7,8-tetrahydrofolate + glycine + H2O = (6S)-5,6,7,8-tetrahydrofolate + L-serine. Its pathway is one-carbon metabolism; tetrahydrofolate interconversion. The protein operates within amino-acid biosynthesis; glycine biosynthesis; glycine from L-serine: step 1/1. Functionally, catalyzes the reversible interconversion of serine and glycine with tetrahydrofolate (THF) serving as the one-carbon carrier. Also exhibits THF-independent aldolase activity toward beta-hydroxyamino acids, producing glycine and aldehydes, via a retro-aldol mechanism. The chain is Serine hydroxymethyltransferase from Methanothrix thermoacetophila (strain DSM 6194 / JCM 14653 / NBRC 101360 / PT) (Methanosaeta thermophila).